The chain runs to 280 residues: Elongation factor Ts (280 aa).

Positions 79–82 are involved in Mg(2+) ion dislocation from EF-Tu; sequence TDFV.

This sequence belongs to the EF-Ts family.

It is found in the cytoplasm. In terms of biological role, associates with the EF-Tu.GDP complex and induces the exchange of GDP to GTP. It remains bound to the aminoacyl-tRNA.EF-Tu.GTP complex up to the GTP hydrolysis stage on the ribosome. The protein is Elongation factor Ts of Vibrio cholerae serotype O1 (strain ATCC 39541 / Classical Ogawa 395 / O395).